The sequence spans 418 residues: Actin-related protein 3-B (418 aa).

This sequence belongs to the actin family. ARP3 subfamily. Component of the Arp2/3 complex composed of actr2/arp2, actr3/arp3, arpc1 (arpc1a or arpc1b), arpc2, arpc3, arpc4 and arpc5.

The protein resides in the cytoplasm. It localises to the cytoskeleton. It is found in the cell projection. The protein localises to the nucleus. In terms of biological role, ATP-binding component of the Arp2/3 complex, a multiprotein complex that mediates actin polymerization upon stimulation by nucleation-promoting factor (NPF). The Arp2/3 complex mediates the formation of branched actin networks in the cytoplasm, providing the force for cell motility. Seems to contact the pointed end of the daughter actin filament. In addition to its role in the cytoplasmic cytoskeleton, the Arp2/3 complex also promotes actin polymerization in the nucleus, thereby regulating gene transcription and repair of damaged DNA. The Arp2/3 complex promotes homologous recombination (HR) repair in response to DNA damage by promoting nuclear actin polymerization, leading to drive motility of double-strand breaks (DSBs). The polypeptide is Actin-related protein 3-B (actr3-b) (Xenopus laevis (African clawed frog)).